The following is a 359-amino-acid chain: MTSTSKGILRPFLIVCVILACFMACLLIYIKPTNSWVFSPMESASSVLKMKNFFSTKTDYFNETTILVWVWPFGQTFDLTSCQAMFNIQGCHLTTDRSLYNKSHAVLIHHRDISWDLTNLPQQARPPFQKWIWMNLESPTHTPQKSGIEHLFNLTLTYRRDSDIQVPYGFLTVSTNPFVFEVPSKEKLVCWVVSNWNPEHARVKYYNELSKSIEIHTYGQAFGEYVNEKNLIPTISTCKFYLSFENSIHKDYITEKLYNAFLAGSVPVVLGPSRENYENYIPADSFIHVEDYNSPSELAKYLKEVDKNNKLYLSYFNWRKDFTVNLPRFWESHACLACDHVKRHQEYKSVGNLEKWFWN.

Over 1–11 (MTSTSKGILRP) the chain is Cytoplasmic. A helical; Signal-anchor for type II membrane protein transmembrane segment spans residues 12–32 (FLIVCVILACFMACLLIYIKP). Residues 33–359 (TNSWVFSPME…VGNLEKWFWN (327 aa)) lie on the Lumenal side of the membrane. Asn62 carries an N-linked (GlcNAc...) asparagine glycan. Residues 63-168 (ETTILVWVWP…RRDSDIQVPY (106 aa)) are acceptor-binding. Position 75 (Gln75) interacts with a beta-D-galactosyl-(1-&gt;4)-N-acetyl-beta-D-glucosaminyl derivative. 3 disulfide bridges follow: Cys82–Cys335, Cys91–Cys338, and Cys190–Cys238. An N-linked (GlcNAc...) asparagine glycan is attached at Asn101. A beta-D-galactosyl-(1-&gt;4)-N-acetyl-beta-D-glucosaminyl derivative is bound at residue Glu137. Glu137 serves as the catalytic Nucleophile. Glu137 contributes to the GDP-beta-L-fucose binding site. Asn153 carries N-linked (GlcNAc...) asparagine glycosylation. Residues Tyr168, Val192, Ser194, Asn195, Arg202, Val226, Tyr241, Asn246, Tyr252, Glu255, and Lys256 each coordinate GDP-beta-L-fucose. The tract at residues 169–326 (GFLTVSTNPF…NWRKDFTVNL (158 aa)) is donor-binding. An acceptor-binding region spans residues 327–359 (PRFWESHACLACDHVKRHQEYKSVGNLEKWFWN).

The protein belongs to the glycosyltransferase 10 family. Homodimer. Post-translationally, N-glycosylated with complex-type N-glycans.

The protein localises to the golgi apparatus. The protein resides in the trans-Golgi network membrane. Its subcellular location is the golgi apparatus membrane. It catalyses the reaction a beta-D-galactosyl-(1-&gt;4)-N-acetyl-beta-D-glucosaminyl derivative + GDP-beta-L-fucose = a beta-D-galactosyl-(1-&gt;4)-[alpha-L-fucosyl-(1-&gt;3)]-N-acetyl-beta-D-glucosaminyl derivative + GDP + H(+). The enzyme catalyses an alpha-Neu5Ac-(2-&gt;3)-beta-D-Gal-(1-&gt;4)-beta-D-GlcNAc-(1-&gt;3)-beta-D-Gal-(1-&gt;4)-beta-D-GlcNAc derivative + GDP-beta-L-fucose = an alpha-Neu5Ac-(2-&gt;3)-beta-D-Gal-(1-&gt;4)-beta-D-GlcNAc-(1-&gt;3)-beta-D-Gal-(1-&gt;4)-[alpha-L-Fuc-(1-&gt;3)]-beta-D-GlcNAc derivative + GDP + H(+). It carries out the reaction alpha-N-glycoloylneuraminosyl-(2-&gt;3)-beta-D-galactosyl-(1-&gt;4)-N-acetyl-beta-D-glucosaminyl-(1-&gt;3)-beta-D-galactosyl-(1-&gt;4)-N-acetyl-beta-D-glucosaminyl-(1-&gt;3)-beta-D-galactosyl-(1-&gt;4)-beta-D-glucosyl-(1&lt;-&gt;1')-ceramide + GDP-beta-L-fucose = alpha-N-glycoloylneuraminosyl-(2-&gt;3)-beta-D-galactosyl-(1-&gt;4)-N-acetyl-beta-D-glucosaminyl-(1-&gt;3)-beta-D-galactosyl-(1-&gt;4)-[alpha-L-fucosyl-(1-&gt;3)]-N-acetyl-beta-D-glucosaminyl-(1-&gt;3)-beta-D-galactosyl-(1-&gt;4)-beta-D-glucosyl-(1&lt;-&gt;1')-ceramide + GDP + H(+). The catalysed reaction is alpha-D-galactosyl-(1-&gt;3)-beta-D-galactosyl-(1-&gt;4)-N-acetyl-beta-D-glucosaminyl-(1-&gt;3)-beta-D-galactosyl-(1-&gt;4)-beta-D-glucosyl-(1&lt;-&gt;1')-ceramide + GDP-beta-L-fucose = a neolactoside IV(3)-alpha-Gal,III(3)-alpha-Fuc-nLc4Cer + GDP + H(+). It catalyses the reaction a neolactoside nLc4Cer + GDP-beta-L-fucose = a neolactoside III(3)-alpha-Fuc-nLc4Cer + GDP + H(+). The enzyme catalyses an N-acetyl-alpha-neuraminyl-(2-&gt;3)-beta-D-galactosyl-(1-&gt;4)-N-acetyl-beta-D-glucosaminyl derivative + GDP-beta-L-fucose = an alpha-Neu5Ac-(2-&gt;3)-beta-D-Gal-(1-&gt;4)-[alpha-L-Fuc-(1-&gt;3)]-beta-D-GlcNAc derivative + GDP + H(+). It carries out the reaction beta-D-Gal-(1-&gt;4)-beta-D-GlcNAc-(1-&gt;3)-beta-D-Gal-(1-&gt;4)-D-Glc + GDP-beta-L-fucose = beta-D-Gal-(1-&gt;4)-[alpha-L-Fuc-(1-&gt;3)]-beta-D-GlcNAc-(1-&gt;3)-beta-D-Gal-(1-&gt;4)-D-Glc + GDP + H(+). The catalysed reaction is an alpha-L-Fuc-(1-&gt;2)-beta-D-Gal-(1-&gt;4)-beta-D-GlcNAc derivative + GDP-beta-L-fucose = an alpha-L-Fuc-(1-&gt;2)-beta-D-Gal-(1-&gt;4)-[alpha-L-Fuc-(1-&gt;3)]-beta-D-GlcNAc derivative + GDP + H(+). It functions in the pathway protein modification; protein glycosylation. It participates in glycolipid biosynthesis. Its activity is regulated as follows. Activated by Mn2+. Catalyzes alpha(1-&gt;3) linkage of fucosyl moiety transferred from GDP-beta-L-fucose to N-acetyl glucosamine (GlcNAc) within type 2 lactosamine (LacNAc, beta-D-Gal-(1-&gt;4)-beta-D-GlcNAc-) glycan attached to glycolipids and N- or O-linked glycoproteins. Fucosylates distal type 2 LacNAc and its fucosylated (H-type 2 LacNAc) and sialylated (sialyl-type 2 LacNAc) derivatives to form Lewis x (Lex) (CD15) and Lewis y (Ley) antigenic epitopes involved in cell adhesion and differentiation. Generates Lex epitopes in the brain, presumably playing a role in the maintenance of neuronal stemness and neurite outgrowth in progenitor neural cells. Fucosylates the internal type 2 LacNAc unit of the polylactosamine chain to form VIM-2 antigen that serves as recognition epitope for SELE. Can also modify milk oligosaccharides in particular type 2 tetrasaccharide LNnT. In Cricetulus griseus (Chinese hamster), this protein is 4-galactosyl-N-acetylglucosaminide 3-alpha-L-fucosyltransferase 9.